A 384-amino-acid polypeptide reads, in one-letter code: Cysteine desulfurase (384 aa).

Pyridoxal 5'-phosphate contacts are provided by residues 74–75 (GT), Asn-154, Gln-180, and 200–202 (SGH). The residue at position 203 (Lys-203) is an N6-(pyridoxal phosphate)lysine. Residue Thr-238 coordinates pyridoxal 5'-phosphate. The active-site Cysteine persulfide intermediate is Cys-325. Cys-325 serves as a coordination point for [2Fe-2S] cluster.

Belongs to the class-V pyridoxal-phosphate-dependent aminotransferase family. NifS/IscS subfamily. Homodimer. Requires pyridoxal 5'-phosphate as cofactor.

The catalysed reaction is (sulfur carrier)-H + L-cysteine = (sulfur carrier)-SH + L-alanine. Catalyzes the removal of elemental sulfur atoms from cysteine to produce alanine. Seems to participate in the biosynthesis of the nitrogenase metalloclusters by providing the inorganic sulfur required for the Fe-S core formation. This is Cysteine desulfurase from Rhodobacter capsulatus (Rhodopseudomonas capsulata).